Here is a 780-residue protein sequence, read N- to C-terminus: Protein SEY1 (780 aa).

Over 1 to 680 (MDSKEEAIQL…KRSMIKTTTH (680 aa)) the chain is Cytoplasmic. Residues 35 to 265 (GVNYHVISVF…NEDYYFKPEY (231 aa)) form the GB1/RHD3-type G domain. 45–52 (GSQSSGKS) is a GTP binding site. Residues 440 to 463 (EVKEEVVKRFENDLKETSDKLRVT) are a coiled coil. A helical membrane pass occupies residues 681–701 (IPLWIYAIIVVLGWNEFMMVI). Residues 702–704 (RNP) are Lumenal-facing. A helical membrane pass occupies residues 705 to 725 (LFVTLTILILVSFYFINKFDL). At 726–780 (WGPVKSVAQTAAGETIGTIKTKLRDFVLEEHEKTPKIQSEKSNSDSEKVVENEKS) the chain is on the cytoplasmic side. A disordered region spans residues 756-780 (HEKTPKIQSEKSNSDSEKVVENEKS).

It belongs to the TRAFAC class dynamin-like GTPase superfamily. GB1/RHD3 GTPase family. RHD3 subfamily.

The protein resides in the endoplasmic reticulum membrane. Cooperates with the reticulon proteins and tubule-shaping DP1 family proteins to generate and maintain the structure of the tubular endoplasmic reticulum network. Has GTPase activity, which is required for its function in ER organization. The sequence is that of Protein SEY1 from Vanderwaltozyma polyspora (strain ATCC 22028 / DSM 70294 / BCRC 21397 / CBS 2163 / NBRC 10782 / NRRL Y-8283 / UCD 57-17) (Kluyveromyces polysporus).